Consider the following 67-residue polypeptide: Kappa-scoloptoxin(04)-Ssd1b (67 aa).

A signal peptide spans 1–24 (MKKTCVVSVFLVLLLLKFHDLSMG). Residues 25–36 (EEISPLKKVARR) constitute a propeptide that is removed on maturation. 2 cysteine pairs are disulfide-bonded: Cys-44/Cys-55 and Cys-49/Cys-62.

Expressed by the venom gland.

The protein resides in the secreted. The polypeptide is Kappa-scoloptoxin(04)-Ssd1b (Scolopendra dehaani (Thai centipede)).